Reading from the N-terminus, the 395-residue chain is Xylose isomerase (395 aa).

Catalysis depends on residues H54 and D57. Mg(2+)-binding residues include E181, E217, H220, D245, D255, D257, and D293.

Belongs to the xylose isomerase family. Homotetramer. Mg(2+) serves as cofactor.

Its subcellular location is the cytoplasm. The catalysed reaction is alpha-D-xylose = alpha-D-xylulofuranose. This Arthrobacter sp. (strain NRRL B3728) protein is Xylose isomerase (xylA).